The sequence spans 1013 residues: Ephrin type-A receptor 5 (1013 aa).

Residues 1–31 form the signal peptide; the sequence is MGLRGGGGRAGGPAPGWTCLLLCAALRSLLA. Over 32-549 the chain is Extracellular; the sequence is SPGSEVNLLD…AASSDQSQIP (518 aa). The 179-residue stretch at 36 to 214 folds into the Eph LBD domain; that stretch reads EVNLLDSRTV…YYKKCPSVIR (179 aa). N-linked (GlcNAc...) asparagine glycans are attached at residues Asn-240, Asn-275, Asn-345, Asn-399, Asn-412, and Asn-437. Fibronectin type-III domains are found at residues 333 to 443 and 444 to 538; these read PPSA…TNQA and APSP…TSPV. Residues 550–570 form a helical membrane-spanning segment; that stretch reads IIVVSVTVGVILLAVVIGFLL. The Cytoplasmic portion of the chain corresponds to 571 to 1013; sequence SGSCCDHGCG…VQLVNGMVPL (443 aa). Phosphotyrosine; by autocatalysis occurs at positions 626 and 632. One can recognise a Protein kinase domain in the interval 651–912; that stretch reads ITIERVIGAG…EIVSMLDKLI (262 aa). ATP contacts are provided by residues 657–665 and Lys-683; that span reads IGAGEFGEV. The active-site Proton acceptor is Asp-776. Phosphotyrosine; by autocatalysis occurs at positions 809 and 958. The SAM domain maps to 941 to 1013; sequence GAYRSVGEWL…VQLVNGMVPL (73 aa). The PDZ-binding signature appears at 1011-1013; it reads VPL.

It belongs to the protein kinase superfamily. Tyr protein kinase family. Ephrin receptor subfamily. In terms of assembly, heterotetramer upon binding of the ligand. The heterotetramer is composed of an ephrin dimer and a receptor dimer. Oligomerization is probably required to induce biological responses. In terms of processing, phosphorylated. Phosphorylation is stimulated by the ligand EFNA5. In terms of tissue distribution, detected in the 10-day embryonic brain, weaker expression in the rest of the 10-day embryo. Undetected in adult tissues.

It is found in the cell membrane. Its subcellular location is the cell projection. The protein localises to the axon. The protein resides in the dendrite. The enzyme catalyses L-tyrosyl-[protein] + ATP = O-phospho-L-tyrosyl-[protein] + ADP + H(+). In terms of biological role, receptor tyrosine kinase which binds promiscuously GPI-anchored ephrin-A family ligands residing on adjacent cells, leading to contact-dependent bidirectional signaling into neighboring cells. The signaling pathway downstream of the receptor is referred to as forward signaling while the signaling pathway downstream of the ephrin ligand is referred to as reverse signaling. Among GPI-anchored ephrin-A ligands, EFNA5 most probably constitutes the cognate/functional ligand for EPHA5. Functions as an axon guidance molecule during development and may be involved in the development of the retinotectal, entorhino-hippocampal and hippocamposeptal pathways. Together with EFNA5 plays also a role in synaptic plasticity in adult brain through regulation of synaptogenesis. The chain is Ephrin type-A receptor 5 (EPHA5) from Gallus gallus (Chicken).